Here is a 178-residue protein sequence, read N- to C-terminus: Small ribosomal subunit protein bS16 (178 aa).

The disordered stretch occupies residues 78-178 (KLGITQWTAG…AAPAEGEEQA (101 aa)). Over residues 91–113 (KKGEPGQKAKERAEERAQREADR) the composition is skewed to basic and acidic residues. Low complexity predominate over residues 114–127 (AAAAAEAAAAPAEE). Residues 128–139 (APAEEAPAEEAA) are compositionally biased toward acidic residues. A compositionally biased stretch (low complexity) spans 140 to 172 (AEAAPEAAAAEEAPAAEAAAEEAAPAAEEAAPA).

Belongs to the bacterial ribosomal protein bS16 family.

This chain is Small ribosomal subunit protein bS16, found in Phenylobacterium zucineum (strain HLK1).